Reading from the N-terminus, the 365-residue chain is Protein RecA (365 aa).

Residue 73–80 (GPESSGKT) participates in ATP binding.

The protein belongs to the RecA family.

The protein localises to the cytoplasm. In terms of biological role, can catalyze the hydrolysis of ATP in the presence of single-stranded DNA, the ATP-dependent uptake of single-stranded DNA by duplex DNA, and the ATP-dependent hybridization of homologous single-stranded DNAs. It interacts with LexA causing its activation and leading to its autocatalytic cleavage. This chain is Protein RecA, found in Prochlorococcus marinus (strain MIT 9215).